Here is a 401-residue protein sequence, read N- to C-terminus: MKILVINCGSSSLKYQLIDMTSEQPIAQGLVERIGIEGSVLTHKVNGKKYKIEEEMKDHKKAIELVLNALVNEEYGVIKNMEEISAVGHRVVHGGEKYAESVLIDSEVMEALEDFVKLAPLHNPPNIIGINACKELMSSTPMVAVFDTAFHQTLPDYAYMYSLPYDLYEKHGIRKYGFHGTSHKYVSAMAAKVLGKNIEDLKLITCHLGNGSSLAAVKNGKCVDTSMGFTPLAGLTMGTRCGDIDPAIVTFLIKELNYSVDEVNKIMNKESGVLGISGISSDFRDILKAASEGNERAELALNIFKNKVIQYIGAYTAVMGGVDAIIFTAGVGENSEPIRKRIISDLGFLGIKLDEEKNKVMGETETISTEDSKVKVLAIPTNEELMIARDTKEIVEKNNIK.

A Mg(2+)-binding site is contributed by Asn-7. ATP is bound at residue Lys-14. Arg-90 contacts substrate. Residue Asp-147 is the Proton donor/acceptor of the active site. ATP contacts are provided by residues 207-211 (HLGNG), 282-284 (DFR), and 330-334 (GVGEN). Residue Glu-383 coordinates Mg(2+).

The protein belongs to the acetokinase family. In terms of assembly, homodimer. Mg(2+) is required as a cofactor. It depends on Mn(2+) as a cofactor.

It localises to the cytoplasm. The enzyme catalyses acetate + ATP = acetyl phosphate + ADP. It participates in metabolic intermediate biosynthesis; acetyl-CoA biosynthesis; acetyl-CoA from acetate: step 1/2. In terms of biological role, catalyzes the formation of acetyl phosphate from acetate and ATP. Can also catalyze the reverse reaction. In Clostridium novyi (strain NT), this protein is Acetate kinase.